The sequence spans 179 residues: Large ribosomal subunit protein uL6 (179 aa).

Belongs to the universal ribosomal protein uL6 family. In terms of assembly, part of the 50S ribosomal subunit.

Its function is as follows. This protein binds to the 23S rRNA, and is important in its secondary structure. It is located near the subunit interface in the base of the L7/L12 stalk, and near the tRNA binding site of the peptidyltransferase center. This Streptomyces avermitilis (strain ATCC 31267 / DSM 46492 / JCM 5070 / NBRC 14893 / NCIMB 12804 / NRRL 8165 / MA-4680) protein is Large ribosomal subunit protein uL6.